A 421-amino-acid polypeptide reads, in one-letter code: Hydrolyase poxO (421 aa).

S239 (nucleophile) is an active-site residue.

This sequence belongs to the AB hydrolase superfamily. FUS2 hydrolase family. Homodimer.

It functions in the pathway secondary metabolite biosynthesis. Functionally, hydrolyase; part of the gene cluster that mediates the biosynthesis of oxaleimides, cytotoxic compounds containing an unusual disubstituted succinimide moiety. The first step of the pathway is provided by the HR-PKS poxF that serves in a new mode of collaborative biosynthesis with the PKS-NRPS poxE, by providing the olefin containing amino acid substrate via the synthesis of an ACP-bound dec-4-enoate. The cytochrome P450 monooxygenase poxM-catalyzed oxidation at the alpha-position creates the enzyme-bound 2-hydroxydec-4-enoyl-ACP thioester, which may be prone to spontaneous hydrolysis to yield 2-hydroxydec-4-enoic acid due to increased electrophilicity of the carbonyl. 2-hydroxydec-4-enoic acid can then be further oxidized by poxM to yield the alpha-ketoacid 2-oxodec-4-enoicacid, which is reductively aminated by the aminotransferase poxL to yield (S,E)-2-aminodec-4-enoic acid. The Hybrid PKS-NRPS synthetase poxE then performs condensation between the octaketide product of its PKS modules and the amino group of (S,E)-2-aminodec-4-enoic acid which is activated and incorporated by the adenylation domain. The resulting aminoacyl product can be cyclized by the Diels-Alderase PoxQ and reductively released by the reductive (R) domain of poxE to yield an aldehyde intermediate. The released aldehyde is then substrate for a Knoevenagel condensation by the hydrolyase poxO followed by an oxidation at the 5-position of the pyrrolidone ring. The presence of the olefin from the amino acid building block allows for migration of the substituted allyl group to occur. This allylic transposition reaction takes place in a conjugate addition, semipinacol-like fashion to yield a succinimide intermediate. Iterative two-electron oxidations of the C7 methyl of the succinimide intermediate to the carboxylic acid can be catalyzed by one of two remaining cytochrome P450 monooxygenasess poxC or poxD to yield oxaleimide A. Subsequent oxidation yields the maleimide scaffold oxaleimide I. Both oxaleimide A and oxaleimide I can undergo oxidative modifications in the decalin ring to yield the series of products oxaleimides B to H. In Penicillium oxalicum (strain 114-2 / CGMCC 5302) (Penicillium decumbens), this protein is Hydrolyase poxO.